The chain runs to 355 residues: MAAAAATAPAAAVVRRMKLGSQGMEVSAQGLGCMGMSAVYGERKPEADMVALVRHAVAAGVTFLDTSDVYGPHTNEVLVGKAGAAAAATEEEVQVQVATKFGITPAWEVRGDPAYVRAACEGSLRRLGVGCIDLYYQHRIDSTVPVEITMGELKKLVEEGKIKYIGLSEASASTIRRAHVVHPITAVQIEWSLWSRDVEEDIVPTCRELGIGIVAYSPLGRGFFSSGAKLVDELPDDDFRKSLPRFQPENLEKNAAIFEKVNAMAARKGCTSSQLALAWVHHQGSDVCPIPGTTKIHNFDQNVGALSVKLTPDEMSELESYASADVVQGDRYHGTFLNTWKNSETPPLSSWRSGN.

The Proton donor role is filled by Tyr70. Position 138 (His138) interacts with substrate. An NADP(+)-binding site is contributed by 217–227; the sequence is SPLGRGFFSSG.

Belongs to the aldo/keto reductase family.

The sequence is that of Probable aldo-keto reductase 3 from Oryza sativa subsp. indica (Rice).